The primary structure comprises 408 residues: Voltage-gated potassium channel subunit beta-1 (408 aa).

Positions 97, 98, 104, and 126 each coordinate NADP(+). Y131 serves as the catalytic Proton donor/acceptor. Residues N199, S229, R230, Q255, W284, S285, P286, L287, A288, C289, K295, R305, G364, S366, Q370, E373, and N374 each contribute to the NADP(+) site.

This sequence belongs to the shaker potassium channel beta subunit family. As to quaternary structure, homotetramer. Interaction with tetrameric potassium channel alpha subunits gives rise to a heterooctamer. Identified in potassium channel complexes containing KCNA1, KCNA2, KCNA4, KCNA5, KCNA6, KCNAB1 and KCNAB2. Part of a complex containing KCNA1, KCNA4 and LGI1; interaction with LGI1 inhibits down-regulation of KCNA1 channel activity. Interacts with the dimer formed by GNB1 and GNG2; this enhances KCNA1 binding. Interacts with SQSTM1. In terms of tissue distribution, expression most abundant in aorta. Also high in left ventricle. Also detected in right ventricle, atrium, brain, skeletal muscle and kidney. Not detected in liver.

The protein resides in the cytoplasm. It is found in the membrane. The protein localises to the cell membrane. It catalyses the reaction a primary alcohol + NADP(+) = an aldehyde + NADPH + H(+). The catalysed reaction is a secondary alcohol + NADP(+) = a ketone + NADPH + H(+). In terms of biological role, regulatory subunit of the voltage-gated potassium (Kv) Shaker channels composed of pore-forming and potassium-conducting alpha subunits and of regulatory beta subunits. The beta-1/KCNAB1 cytoplasmic subunit mediates closure of delayed rectifier potassium channels by physically obstructing the pore via its N-terminal domain and increases the speed of channel closure for other family members. Promotes the inactivation of Kv1.1/KCNA1, Kv1.2/KCNA2, Kv1.4/KCNA4, Kv1.5/KCNA5 and Kv1.6/KCNA6 alpha subunit-containing channels. Displays nicotinamide adenine dinucleotide phosphate (NADPH)-dependent aldoketoreductase activity by catalyzing the NADPH-dependent reduction of a variety of endogenous aldehydes and ketones. The binding of NADPH is required for efficient down-regulation of potassium channel activity. Oxidation of the bound NADPH restrains N-terminal domain from blocking the channel, thereby decreasing N-type inactivation of potassium channel activity. This Mustela putorius (European polecat) protein is Voltage-gated potassium channel subunit beta-1 (KCNAB1).